The sequence spans 443 residues: MSTTPNIGFISLGCPKNLVDSERILTELRTDGYNIIPSYENADLVIVNTCGFIDSAVQESLEAIGEALEENGKVIVTGCLGAKENQIREVHPKVLEITGPHSYEAVMKHVHKYVPRPERNIYTSLVPAQGVKLTPKHYAYLKISEGCDHRCTFCIIPSMRGDLDSRPIVQVLDEAKRLADSGVKELLIVSQDTSAYALDQSKENQNKTVFWNGAPIKNNLITLCEQLGSLGIWVRLHYVYPYPHVDDLIPLMAQGKILPYLDIPLQHASPKVLKAMKRPGAIDRTLERIKKWREICPELTLRSTFIVGFPGETEEDFQMLLDFLEEAQLDRVGCFKFSPVEGAVATEMADQVSEDVKEERFHRFMQVQQRISAARLQQKVGKTLAVIIDEIDEEGIIGRSMADAPEIDGVVYVDNLSEQEVKVGQVISVSITNADEYDLWGTC.

An MTTase N-terminal domain is found at Pro-5–Pro-115. The [4Fe-4S] cluster site is built by Cys-14, Cys-50, Cys-79, Cys-147, Cys-151, and Cys-154. A Radical SAM core domain is found at Leu-133–Ala-374. Residues Gln-377 to Cys-443 enclose the TRAM domain.

It belongs to the methylthiotransferase family. RimO subfamily. The cofactor is [4Fe-4S] cluster.

It localises to the cytoplasm. It carries out the reaction L-aspartate(89)-[ribosomal protein uS12]-hydrogen + (sulfur carrier)-SH + AH2 + 2 S-adenosyl-L-methionine = 3-methylsulfanyl-L-aspartate(89)-[ribosomal protein uS12]-hydrogen + (sulfur carrier)-H + 5'-deoxyadenosine + L-methionine + A + S-adenosyl-L-homocysteine + 2 H(+). In terms of biological role, catalyzes the methylthiolation of an aspartic acid residue of ribosomal protein uS12. The chain is Ribosomal protein uS12 methylthiotransferase RimO from Actinobacillus pleuropneumoniae serotype 7 (strain AP76).